Reading from the N-terminus, the 355-residue chain is uncharacterized protein (355 aa).

The protein belongs to the carbohydrate kinase PfkB family.

This is an uncharacterized protein from Dictyostelium discoideum (Social amoeba).